A 628-amino-acid polypeptide reads, in one-letter code: Chaperone protein DnaK (628 aa).

Thr-197 bears the Phosphothreonine; by autocatalysis mark. Residues 597-628 form a disordered region; that stretch reads EQMYKGEQGAQGGAADTSKKKSDDDVIDAEIE.

It belongs to the heat shock protein 70 family.

Its function is as follows. Acts as a chaperone. This chain is Chaperone protein DnaK, found in Sulfurimonas denitrificans (strain ATCC 33889 / DSM 1251) (Thiomicrospira denitrificans (strain ATCC 33889 / DSM 1251)).